The primary structure comprises 385 residues: 8-amino-7-oxononanoate synthase (385 aa).

R21 contributes to the substrate binding site. 108-109 (GF) provides a ligand contact to pyridoxal 5'-phosphate. H133 contributes to the substrate binding site. Pyridoxal 5'-phosphate-binding residues include S179, H207, and T233. K236 carries the post-translational modification N6-(pyridoxal phosphate)lysine. T352 serves as a coordination point for substrate.

It belongs to the class-II pyridoxal-phosphate-dependent aminotransferase family. BioF subfamily. As to quaternary structure, homodimer. Pyridoxal 5'-phosphate is required as a cofactor.

The catalysed reaction is 6-carboxyhexanoyl-[ACP] + L-alanine + H(+) = (8S)-8-amino-7-oxononanoate + holo-[ACP] + CO2. The protein operates within cofactor biosynthesis; biotin biosynthesis. Its function is as follows. Catalyzes the decarboxylative condensation of pimeloyl-[acyl-carrier protein] and L-alanine to produce 8-amino-7-oxononanoate (AON), [acyl-carrier protein], and carbon dioxide. The protein is 8-amino-7-oxononanoate synthase of Salmonella schwarzengrund (strain CVM19633).